A 38-amino-acid polypeptide reads, in one-letter code: Large ribosomal subunit protein bL36 (38 aa).

The protein belongs to the bacterial ribosomal protein bL36 family.

The polypeptide is Large ribosomal subunit protein bL36 (Prochlorococcus marinus (strain SARG / CCMP1375 / SS120)).